A 686-amino-acid chain; its full sequence is Thymidine kinase (686 aa).

Over residues 1-14 the composition is skewed to polar residues; sequence MASNSHNNYNTPRR. 2 disordered regions span residues 1-21 and 64-85; these read MASN…DVPK and NPGL…PSSD. 243-250 provides a ligand contact to ATP; sequence GCMAAGKT. The active-site Proton acceptor is Glu-270. Gln-308 provides a ligand contact to substrate. Arg-398 is a binding site for ATP. Arg-404 lines the substrate pocket.

This sequence belongs to the herpesviridae thymidine kinase family. In terms of assembly, homodimer.

It carries out the reaction thymidine + ATP = dTMP + ADP + H(+). Functionally, catalyzes the transfer of the gamma-phospho group of ATP to thymidine to generate dTMP in the salvage pathway of pyrimidine synthesis. The dTMP serves as a substrate for DNA polymerase during viral DNA replication. Allows the virus to be reactivated and to grow in non-proliferative cells lacking a high concentration of phosphorylated nucleic acid precursors. This chain is Thymidine kinase, found in Alcelaphine herpesvirus 1 (strain WC11) (AlHV-1).